We begin with the raw amino-acid sequence, 271 residues long: Orotidine 5'-phosphate decarboxylase (271 aa).

Residue lysine 97 is the Proton donor of the active site.

It belongs to the OMP decarboxylase family. Type 2 subfamily.

It carries out the reaction orotidine 5'-phosphate + H(+) = UMP + CO2. Its pathway is pyrimidine metabolism; UMP biosynthesis via de novo pathway; UMP from orotate: step 2/2. This is Orotidine 5'-phosphate decarboxylase from Leptospira borgpetersenii serovar Hardjo-bovis (strain L550).